A 101-amino-acid polypeptide reads, in one-letter code: Chaperone modulatory protein CbpM (101 aa).

This sequence belongs to the CbpM family.

In terms of biological role, interacts with CbpA and inhibits both the DnaJ-like co-chaperone activity and the DNA binding activity of CbpA. Together with CbpA, modulates the activity of the DnaK chaperone system. Does not inhibit the co-chaperone activity of DnaJ. This Pseudomonas entomophila (strain L48) protein is Chaperone modulatory protein CbpM.